The primary structure comprises 999 residues: Ulvan lyase, long isoform (999 aa).

The N-terminal stretch at 1–21 (MKCLKTLLVSTTLLTAFSLNA) is a signal peptide. 126–127 (SH) contributes to the substrate binding site. His-127 serves as the catalytic Proton donor/acceptor. Residues Asp-189, Asp-199, and Lys-201 each coordinate Ca(2+). Residues Tyr-280 and Arg-297 each contribute to the substrate site. Ca(2+) is bound by residues Asp-300, Asp-303, and Tyr-305. Tyr-361 contacts substrate.

Belongs to the polysaccharide lyase 24 family.

Its function is as follows. Ulvan lyase involved in ulvan degradation. Ulvan is the main polysaccharide component of the Ulvales (green seaweed) cell wall. It is composed of disaccharide building blocks comprising 3-sulfated rhamnose (Rha3S) linked to D-glucuronic acid (GlcA), L-iduronic acid (IduA), or D-xylose (Xyl). Ulvan lyase catalyzes preferentially the endolytic cleavage of the glycosidic bond between Rha3S and the uronic acid GlcA, but not IduA, producing oligosaccharides that have unsaturated 4-deoxy-L-threo-hex-4-enopyranosiduronic acid (deltaUA) at the non-reducing end. The most abundant end products in the degradation of the ulvan polysaccharide were deltaUA-Rha3S disaccharides and deltaUA-Rha3S-IduA-Rha3S and deltaUA-Rha3S-Xyl-Rha3S tetrasaccharides. The polypeptide is Ulvan lyase, long isoform (Alteromonas sp. (strain LOR)).